The following is a 451-amino-acid chain: Clusterin (451 aa).

A signal peptide spans 1 to 18; sequence MELPLLALLSLGLVCQGG. 5 disulfides stabilise this stretch: cysteine 98–cysteine 314, cysteine 109–cysteine 306, cysteine 112–cysteine 303, cysteine 117–cysteine 296, and cysteine 125–cysteine 286. N-linked (GlcNAc...) asparagine glycosylation is found at asparagine 99, asparagine 141, asparagine 278, asparagine 355, asparagine 375, and asparagine 447.

The protein belongs to the clusterin family. As to quaternary structure, antiparallel disulfide-linked heterodimer of an alpha chain and a beta chain. Self-associates and forms higher oligomers. Interacts with a broad range of misfolded proteins. In terms of processing, proteolytically cleaved on its way through the secretory system, probably within the Golgi lumen. Post-translationally, polyubiquitinated, leading to proteasomal degradation.

Its subcellular location is the secreted. The protein resides in the cytoplasmic vesicle. The protein localises to the secretory vesicle. It localises to the chromaffin granule. It is found in the nucleus. Its subcellular location is the cytoplasm. The protein resides in the mitochondrion membrane. The protein localises to the cytosol. It localises to the endoplasmic reticulum. Functionally, functions as extracellular chaperone that prevents aggregation of nonnative proteins. Prevents stress-induced aggregation of blood plasma proteins. Does not require ATP. Maintains partially unfolded proteins in a state appropriate for subsequent refolding by other chaperones, such as HSPA8/HSC70. Does not refold proteins by itself. Binding to cell surface receptors triggers internalization of the chaperone-client complex and subsequent lysosomal or proteasomal degradation. When secreted, protects cells against apoptosis and against cytolysis by complement: inhibits assembly of the complement membrane attack complex (MAC) by preventing polymerization of C9 pore component of the MAC complex. Intracellular forms interact with ubiquitin and SCF (SKP1-CUL1-F-box protein) E3 ubiquitin-protein ligase complexes and promote the ubiquitination and subsequent proteasomal degradation of target proteins. Modulates NF-kappa-B transcriptional activity. Promotes apoptosis when in the nucleus. Inhibits apoptosis when associated with the mitochondrial membrane by interference with BAX-dependent release of cytochrome c into the cytoplasm. Plays a role in the regulation of cell proliferation. The chain is Clusterin (CLU) from Coturnix japonica (Japanese quail).